The sequence spans 412 residues: Heme chaperone HemW (412 aa).

Positions 4-241 (GTYLMPTAAY…RHGQEVLTQA (238 aa)) constitute a Radical SAM core domain. Tyr-13 is an S-adenosyl-L-methionine binding site. Residues Cys-19, Cys-23, and Cys-26 each contribute to the [2Fe-2S] cluster site. S-adenosyl-L-methionine is bound by residues Gly-72, 73 to 74 (GT), Glu-105, Gln-132, Arg-144, and Asp-169.

The protein belongs to the anaerobic coproporphyrinogen-III oxidase family. HemW subfamily. Requires [4Fe-4S] cluster as cofactor.

It is found in the cytoplasm. Functionally, probably acts as a heme chaperone, transferring heme to an unknown acceptor. Binds one molecule of heme per monomer, possibly covalently. Binds 1 [2Fe-2S] cluster. Although this protein has sequence motifs typically found in proteins binding the [4Fe-4S]-AdoMet radical-SAM cluster and S-adenosylmethionine, spectroscopic evidence suggests that a [2Fe-2S] cluster is present; S-adenosylmethionine was not detected. Has no detectable coproporphyrinogen-III oxidase activity. The sequence is that of Heme chaperone HemW from Synechocystis sp. (strain ATCC 27184 / PCC 6803 / Kazusa).